The primary structure comprises 639 residues: Protein phosphatase 2C 35 (639 aa).

Positions 227-630 (GGDPCGLQWA…DDVSVIVISL (404 aa)) constitute a PPM-type phosphatase domain. The Mn(2+) site is built by Asp262 and Gly263. Residues 295 to 341 (QNVQHDQRPDQPGSAPSTTASDNQDQWGRRRRTRRSRPPRGADDDQR) form a disordered region. The span at 308-320 (SAPSTTASDNQDQ) shows a compositional bias: polar residues. Positions 323-332 (RRRRTRRSRP) are enriched in basic residues. Positions 558 and 621 each coordinate Mn(2+).

Belongs to the PP2C family. In terms of assembly, interacts with XA21 (via juxtamembrane and kinase domains). It depends on Mg(2+) as a cofactor. Requires Mn(2+) as cofactor.

It localises to the cell membrane. The enzyme catalyses O-phospho-L-seryl-[protein] + H2O = L-seryl-[protein] + phosphate. It carries out the reaction O-phospho-L-threonyl-[protein] + H2O = L-threonyl-[protein] + phosphate. In terms of biological role, protein phosphatase that acts on XA21 pathogen recognition receptor. Negatively regulates cell death and XA21-mediated innate immunity. In Oryza sativa subsp. japonica (Rice), this protein is Protein phosphatase 2C 35 (XB15).